Here is a 48-residue protein sequence, read N- to C-terminus: Delta-stichotoxin-Hcr1a (48 aa).

Disulfide bonds link cysteine 3/cysteine 43, cysteine 5/cysteine 33, and cysteine 26/cysteine 44. At lysine 48 the chain carries Lysine amide; partial; in Delta-stichotoxin-Hcr1f.

This sequence belongs to the sea anemone sodium channel inhibitory toxin family. Type II subfamily. As to quaternary structure, probably composed of two peptide chains of 12 and 35 residues connected by two disulfide bonds (Cys-3-Cys-43 and Cys-5-Cys-33). Delta-SHTX-Hcr1f (RTX-VI) may be the result of post-translational modification of delta-SHTX-Hcr1a (RTX-III), which would consist of Arg-13 cleavage.

It localises to the secreted. Its subcellular location is the nematocyst. Its function is as follows. Binds to site 3 of voltage-gated sodium channels and inhibits the inactivation process. Specifically inhibits mammalian Nav1.3/SCN3A and Nav1.6/SCN8A sodium channels, as well as insect BgNav1 and VdNav1 sodium channels. Binds to site 3 of voltage-gated sodium channels and inhibits the inactivation process. Specifically inhibits mammalian Nav1.2/SCN3A (low inhibition) and Nav1.6/SCN8A sodium channels, as well as insect BgNav1 and VdNav1 sodium channels. This chain is Delta-stichotoxin-Hcr1a, found in Radianthus crispa (Leathery sea anemone).